We begin with the raw amino-acid sequence, 393 residues long: Chorismate synthase (393 aa).

NADP(+)-binding residues include Arg40 and Arg46. FMN-binding positions include 129–131 (RSS), 249–250 (QA), Gly301, 316–320 (KPIPT), and Arg342.

This sequence belongs to the chorismate synthase family. Homotetramer. The cofactor is FMNH2.

The catalysed reaction is 5-O-(1-carboxyvinyl)-3-phosphoshikimate = chorismate + phosphate. It participates in metabolic intermediate biosynthesis; chorismate biosynthesis; chorismate from D-erythrose 4-phosphate and phosphoenolpyruvate: step 7/7. Functionally, catalyzes the anti-1,4-elimination of the C-3 phosphate and the C-6 proR hydrogen from 5-enolpyruvylshikimate-3-phosphate (EPSP) to yield chorismate, which is the branch point compound that serves as the starting substrate for the three terminal pathways of aromatic amino acid biosynthesis. This reaction introduces a second double bond into the aromatic ring system. The polypeptide is Chorismate synthase (Geobacter sulfurreducens (strain ATCC 51573 / DSM 12127 / PCA)).